Here is a 597-residue protein sequence, read N- to C-terminus: Nuclear factor erythroid 2-related factor 2 (597 aa).

The DLG motif motif lies at aspartate 29 to glycine 31. Serine 40 carries the phosphoserine; by PKC modification. An ETGE motif motif is present at residues glutamate 79–glutamate 82. Serine 207 is modified (phosphoserine). Residues threonine 327–serine 440 form a disordered region. Over residues serine 333–arginine 345 the composition is skewed to polar residues. Lysine 454, lysine 464, and lysine 479 each carry an N-linked (Glc) (glycation) lysine glycan. Residues leucine 489–leucine 552 form the bZIP domain. The N-linked (Glc) (glycation) arginine glycan is linked to arginine 491. The basic motif stretch occupies residues arginine 491–lysine 510. The leucine-zipper stretch occupies residues isoleucine 514–leucine 521. Arginine 561 is a glycosylation site (N-linked (Glc) (glycation) arginine). The disordered stretch occupies residues glutamate 563–asparagine 597. N-linked (Glc) (glycation) lysine glycosylation is present at lysine 566. Over residues serine 571–aspartate 580 the composition is skewed to polar residues. Positions valine 583–lysine 588 are mediates interaction with CHD6 and is necessary to activate transcription. Lysine 588 and lysine 591 each carry N6-acetyllysine; by CREBBP.

It belongs to the bZIP family. CNC subfamily. Heterodimer; heterodimerizes with small Maf proteins. Interacts (via the bZIP domain) with MAFG and MAFK; required for binding to antioxidant response elements (AREs) on DNA. Interacts with KEAP1; the interaction is direct and promotes ubiquitination by the BCR(KEAP1) E3 ubiquitin ligase complex. Forms a ternary complex with PGAM5 and KEAP1. Interacts with EEF1D at heat shock promoter elements (HSE). Interacts via its leucine-zipper domain with the coiled-coil domain of PMF1. Interacts with CHD6; involved in activation of the transcription. Interacts with ESRRB; represses NFE2L2 transcriptional activity. Interacts with MOTS-c, a peptide produced by the mitochondrially encoded 12S rRNA MT-RNR1; the interaction occurs in the nucleus following metabolic stress. Ubiquitinated in the cytoplasm by the BCR(KEAP1) E3 ubiquitin ligase complex leading to its degradation. In response to oxidative stress, electrophile metabolites, such as sulforaphane, modify KEAP1, leading to inhibit activity of the BCR(KEAP1) complex, promoting NFE2L2/NRF2 nuclear accumulation and activity. In response to autophagy, the BCR(KEAP1) complex is inactivated. In terms of processing, phosphorylated by EIF2AK3/PERK following unfolded protein response (UPR), promoting dissociation from its cytoplasmic inhibitor KEAP1, followed by its translocation into the nucleus. Phosphorylation of Ser-40 by PKC in response to oxidative stress dissociates NFE2L2 from its cytoplasmic inhibitor KEAP1, promoting its translocation into the nucleus. Post-translationally, acetylation at Lys-588 and Lys-591 increases nuclear localization whereas deacetylation by SIRT1 enhances cytoplasmic presence. Glycation impairs transcription factor activity by preventing heterodimerization with small Maf proteins. Deglycation by FN3K restores activity. As to expression, widely expressed. Highest expression in liver, skeletal muscle, luminal cells of the stomach and intestine, lining of the bronchi and alveoli, and in renal tubules; followed by heart, spleen, testis and brain.

It is found in the cytoplasm. The protein resides in the cytosol. The protein localises to the nucleus. Transcription factor that plays a key role in the response to oxidative stress: binds to antioxidant response (ARE) elements present in the promoter region of many cytoprotective genes, such as phase 2 detoxifying enzymes, and promotes their expression, thereby neutralizing reactive electrophiles. In normal conditions, ubiquitinated and degraded in the cytoplasm by the BCR(KEAP1) complex. In response to oxidative stress, electrophile metabolites inhibit activity of the BCR(KEAP1) complex, promoting nuclear accumulation of NFE2L2/NRF2, heterodimerization with one of the small Maf proteins and binding to ARE elements of cytoprotective target genes. The NFE2L2/NRF2 pathway is also activated in response to selective autophagy: autophagy promotes interaction between KEAP1 and SQSTM1/p62 and subsequent inactivation of the BCR(KEAP1) complex, leading to NFE2L2/NRF2 nuclear accumulation and expression of cytoprotective genes. The NFE2L2/NRF2 pathway is also activated during the unfolded protein response (UPR), contributing to redox homeostasis and cell survival following endoplasmic reticulum stress. May also be involved in the transcriptional activation of genes of the beta-globin cluster by mediating enhancer activity of hypersensitive site 2 of the beta-globin locus control region. Also plays an important role in the regulation of the innate immune response. It is a critical regulator of the innate immune response and survival during sepsis by maintaining redox homeostasis and restraint of the dysregulation of pro-inflammatory signaling pathways like MyD88-dependent and -independent and TNF-alpha signaling. Suppresses macrophage inflammatory response by blocking pro-inflammatory cytokine transcription and the induction of IL6. Binds to the proximity of pro-inflammatory genes in macrophages and inhibits RNA Pol II recruitment. The inhibition is independent of the Nrf2-binding motif and reactive oxygen species level. Represses antiviral cytosolic DNA sensing by suppressing the expression of the adapter protein STING1 and decreasing responsiveness to STING1 agonists while increasing susceptibility to infection with DNA viruses. The chain is Nuclear factor erythroid 2-related factor 2 from Mus musculus (Mouse).